Reading from the N-terminus, the 358-residue chain is 4-hydroxy-2-oxovalerate aldolase 2 (358 aa).

The region spanning 16 to 268 (VLLHDMCLRD…ETGVDLFKLM (253 aa)) is the Pyruvate carboxyltransferase domain. Residue 24 to 25 (RD) coordinates substrate. Residue Asp-25 participates in Mn(2+) binding. His-28 acts as the Proton acceptor in catalysis. Ser-178 and His-207 together coordinate substrate. Mn(2+) contacts are provided by His-207 and His-209. Tyr-298 provides a ligand contact to substrate.

The protein belongs to the 4-hydroxy-2-oxovalerate aldolase family.

The enzyme catalyses (S)-4-hydroxy-2-oxopentanoate = acetaldehyde + pyruvate. The protein is 4-hydroxy-2-oxovalerate aldolase 2 of Methylibium petroleiphilum (strain ATCC BAA-1232 / LMG 22953 / PM1).